The sequence spans 131 residues: uncharacterized protein (131 aa).

A disordered region spans residues 60–100; the sequence is GRHTLSQVPNKGHEKASAVQLPEKQGTDQSRRGPTSAVTKA. Over residues 91–100 the composition is skewed to polar residues; sequence RGPTSAVTKA.

This is an uncharacterized protein from Homo sapiens (Human).